The primary structure comprises 467 residues: UDP-N-acetylmuramate--L-alanine ligase (467 aa).

Position 114–120 (Gly114–Thr120) interacts with ATP.

Belongs to the MurCDEF family.

It is found in the cytoplasm. It carries out the reaction UDP-N-acetyl-alpha-D-muramate + L-alanine + ATP = UDP-N-acetyl-alpha-D-muramoyl-L-alanine + ADP + phosphate + H(+). The protein operates within cell wall biogenesis; peptidoglycan biosynthesis. Functionally, cell wall formation. This chain is UDP-N-acetylmuramate--L-alanine ligase, found in Rhodopseudomonas palustris (strain BisB5).